A 174-amino-acid polypeptide reads, in one-letter code: NADH-quinone oxidoreductase subunit I (174 aa).

4Fe-4S ferredoxin-type domains follow at residues 44-74 (LNRY…VEGD) and 90-119 (RVYQ…MTND). Residues cysteine 54, cysteine 57, cysteine 60, cysteine 64, cysteine 99, cysteine 102, cysteine 105, and cysteine 109 each contribute to the [4Fe-4S] cluster site.

The protein belongs to the complex I 23 kDa subunit family. In terms of assembly, NDH-1 is composed of 14 different subunits. Subunits NuoA, H, J, K, L, M, N constitute the membrane sector of the complex. [4Fe-4S] cluster is required as a cofactor.

The protein resides in the cell membrane. It carries out the reaction a quinone + NADH + 5 H(+)(in) = a quinol + NAD(+) + 4 H(+)(out). Its function is as follows. NDH-1 shuttles electrons from NADH, via FMN and iron-sulfur (Fe-S) centers, to quinones in the respiratory chain. The immediate electron acceptor for the enzyme in this species is believed to be menaquinone. Couples the redox reaction to proton translocation (for every two electrons transferred, four hydrogen ions are translocated across the cytoplasmic membrane), and thus conserves the redox energy in a proton gradient. In Mycobacterium sp. (strain KMS), this protein is NADH-quinone oxidoreductase subunit I.